A 201-amino-acid chain; its full sequence is Small ribosomal subunit protein uS4c (201 aa).

The segment at 19–38 (PGLTSKSPKAGSDLRNQLRS) is disordered. Positions 89–149 (MRLDNILFRL…DEQKSRALIQ (61 aa)) constitute an S4 RNA-binding domain.

This sequence belongs to the universal ribosomal protein uS4 family. In terms of assembly, part of the 30S ribosomal subunit. Contacts protein S5. The interaction surface between S4 and S5 is involved in control of translational fidelity.

The protein localises to the plastid. The protein resides in the chloroplast. In terms of biological role, one of the primary rRNA binding proteins, it binds directly to 16S rRNA where it nucleates assembly of the body of the 30S subunit. With S5 and S12 plays an important role in translational accuracy. The chain is Small ribosomal subunit protein uS4c (rps4) from Platanus occidentalis (Sycamore).